Reading from the N-terminus, the 140-residue chain is NTF2-related export protein 1 (140 aa).

Residue Ala-2 is modified to N-acetylalanine. An NTF2 domain is found at 16–135 (AAEEFVNVYY…WKIASDCFRF (120 aa)).

Heterodimer with NXF1. Forms a complex with RANGAP1, RANBP2/NUP358 and NXF1. Interacts (via NTF2 domain) with NXF1. Stabilizes the NTF2 domain of NXF1 by heterodimerization. The formation of NXF1-NXT1 heterodimers is required for the NXF1-mediated nuclear mRNA export. Preferentially binds Ran-GTP. Associates with NXF2, NXF3 and NXF5. Does not bind nucleoporins (NPC) directly, its association to NPC is mediated by NXF1.

It localises to the nucleus. The protein resides in the nucleus speckle. It is found in the cytoplasm. In terms of biological role, stimulator of protein export for NES-containing proteins. Also plays a role in the nuclear export of U1 snRNA, tRNA, and mRNA. The NXF1-NXT1 heterodimer is involved in the export of HSP70 mRNA in conjunction with ALYREF/THOC4 and THOC5. The polypeptide is NTF2-related export protein 1 (NXT1) (Bos taurus (Bovine)).